Reading from the N-terminus, the 399-residue chain is Argininosuccinate synthase (399 aa).

8–16 provides a ligand contact to ATP; that stretch reads AYSGGLDTS. Tyr-87 lines the L-citrulline pocket. ATP is bound at residue Gly-117. Positions 119, 123, and 124 each coordinate L-aspartate. Position 123 (Asn-123) interacts with L-citrulline. L-citrulline contacts are provided by Arg-127, Ser-175, Glu-259, and Tyr-271.

Belongs to the argininosuccinate synthase family. Type 1 subfamily. In terms of assembly, homotetramer.

It localises to the cytoplasm. The enzyme catalyses L-citrulline + L-aspartate + ATP = 2-(N(omega)-L-arginino)succinate + AMP + diphosphate + H(+). The protein operates within amino-acid biosynthesis; L-arginine biosynthesis; L-arginine from L-ornithine and carbamoyl phosphate: step 2/3. In Corynebacterium diphtheriae (strain ATCC 700971 / NCTC 13129 / Biotype gravis), this protein is Argininosuccinate synthase.